We begin with the raw amino-acid sequence, 126 residues long: Larval cuticle protein 2 (126 aa).

The first 16 residues, 1–16, serve as a signal peptide directing secretion; that stretch reads MFKFVMVFAVLGLAAA. Residues 39–100 form the Chitin-binding type R&amp;R domain; it reads ADGFDTDLVV…PVGAVLPTPP (62 aa).

In terms of biological role, component of the larval cuticle. This chain is Larval cuticle protein 2 (Lcp2), found in Drosophila miranda (Fruit fly).